We begin with the raw amino-acid sequence, 953 residues long: Ribonuclease E (953 aa).

Disordered regions lie at residues 1 to 23 (MIDG…PDRL) and 118 to 314 (VAPQ…RRRP). Over residues 14-23 (SQHEELPDRL) the composition is skewed to basic and acidic residues. The segment covering 127 to 150 (LADDEDVDDGPDYVADDSDADDEG) has biased composition (acidic residues). The span at 157 to 169 (NRRRRRGRRGRGR) shows a compositional bias: basic residues. Residues 183-193 (DQQSEPRAQQF) show a composition bias toward polar residues. The span at 199–223 (AETDDGDDRDSEDTEAGDNGEDENG) shows a compositional bias: acidic residues. The span at 230–240 (RRRRRRRRRKS) shows a compositional bias: basic residues. Composition is skewed to basic and acidic residues over residues 263 to 272 (VHERVPRAGD) and 294 to 311 (TRLE…DAGR). Residues 376-453 (GNIYLGIVQN…GHKGARLTTQ (78 aa)) enclose the S1 motif domain. 2 residues coordinate Mg(2+): Asp-647 and Asp-691. Zn(2+) is bound by residues Cys-749 and Cys-752. 2 disordered regions span residues 766-808 (SAAA…APGE) and 822-953 (LAGR…IRLD). The span at 848 to 915 (DLDDTAQADF…DADVDEEDAA (68 aa)) shows a compositional bias: acidic residues.

Belongs to the RNase E/G family. Assembles into a homotetramer formed by a dimer of dimers. Interacts with DNA-binding protein HU (hupB). It depends on Mg(2+) as a cofactor. The cofactor is Zn(2+).

The protein localises to the cytoplasm. It carries out the reaction Endonucleolytic cleavage of single-stranded RNA in A- and U-rich regions.. Functionally, endoribonuclease that plays a central role in RNA processing and decay. Plays a major role in pre-16S rRNA maturation, probably generating the mature 5'-end, and a minor role in pre-5S and pre-23S rRNA maturation. Probably also processes tRNA. RNase E and HupB jointly contribute to cellular adaptation to changing growth conditions and survival during antibiotic treatment and in the host. The polypeptide is Ribonuclease E (Mycobacterium tuberculosis (strain ATCC 25618 / H37Rv)).